Reading from the N-terminus, the 124-residue chain is Protein Rev (124 aa).

Position 5 is a phosphoserine; by host CK2 (serine 5). The interval isoleucine 19 to asparagine 27 is homomultimerization. The disordered stretch occupies residues glutamine 25 to lysine 51. The Nuclear localization signal and RNA-binding (RRE) signature appears at threonine 35–lysine 51. Residues lysine 37–glutamine 50 are compositionally biased toward basic residues. The short motif at leucine 74–glutamine 85 is the Nuclear export signal and binding to XPO1 element. Residues threonine 90–glycine 106 are compositionally biased toward polar residues. The tract at residues threonine 90–asparagine 124 is disordered.

It belongs to the HIV-1 REV protein family. As to quaternary structure, homomultimer; when bound to the RRE. Multimeric assembly is essential for activity and may involve XPO1. Binds to human KPNB1, XPO1, TNPO1, RANBP5 and IPO7. Interacts with the viral Integrase. Interacts with human KHDRBS1. Interacts with human NAP1; this interaction decreases Rev multimerization and stimulates its activity. Interacts with human DEAD-box helicases DDX3 and DDX24; these interactions may serve for viral RNA export to the cytoplasm and packaging, respectively. Interacts with human PSIP1; this interaction may inhibit HIV-1 DNA integration by promoting dissociation of the Integrase-LEDGF/p75 complex. Asymmetrically arginine dimethylated at one site by host PRMT6. Methylation impairs the RNA-binding activity and export of viral RNA from the nucleus to the cytoplasm. In terms of processing, phosphorylated by protein kinase CK2. Presence of, and maybe binding to the N-terminus of the regulatory beta subunit of CK2 is necessary for CK2-mediated Rev's phosphorylation.

The protein localises to the host nucleus. Its subcellular location is the host nucleolus. It localises to the host cytoplasm. In terms of biological role, escorts unspliced or incompletely spliced viral pre-mRNAs (late transcripts) out of the nucleus of infected cells. These pre-mRNAs carry a recognition sequence called Rev responsive element (RRE) located in the env gene, that is not present in fully spliced viral mRNAs (early transcripts). This function is essential since most viral proteins are translated from unspliced or partially spliced pre-mRNAs which cannot exit the nucleus by the pathway used by fully processed cellular mRNAs. Rev itself is translated from a fully spliced mRNA that readily exits the nucleus. Rev's nuclear localization signal (NLS) binds directly to KPNB1/Importin beta-1 without previous binding to KPNA1/Importin alpha-1. KPNB1 binds to the GDP bound form of RAN (Ran-GDP) and targets Rev to the nucleus. In the nucleus, the conversion from Ran-GDP to Ran-GTP dissociates Rev from KPNB1 and allows Rev's binding to the RRE in viral pre-mRNAs. Rev multimerization on the RRE via cooperative assembly exposes its nuclear export signal (NES) to the surface. Rev can then form a complex with XPO1/CRM1 and Ran-GTP, leading to nuclear export of the complex. Conversion from Ran-GTP to Ran-GDP mediates dissociation of the Rev/RRE/XPO1/RAN complex, so that Rev can return to the nucleus for a subsequent round of export. Beside KPNB1, also seems to interact with TNPO1/Transportin-1, RANBP5/IPO5 and IPO7/RANBP7 for nuclear import. The nucleoporin-like HRB/RIP is an essential cofactor that probably indirectly interacts with Rev to release HIV RNAs from the perinuclear region to the cytoplasm. This Pan (chimpanzees) protein is Protein Rev.